Here is a 616-residue protein sequence, read N- to C-terminus: Proline--tRNA ligase (616 aa).

It belongs to the class-II aminoacyl-tRNA synthetase family. ProS type 1 subfamily. Homodimer.

The protein resides in the cytoplasm. The enzyme catalyses tRNA(Pro) + L-proline + ATP = L-prolyl-tRNA(Pro) + AMP + diphosphate. Its function is as follows. Catalyzes the attachment of proline to tRNA(Pro) in a two-step reaction: proline is first activated by ATP to form Pro-AMP and then transferred to the acceptor end of tRNA(Pro). As ProRS can inadvertently accommodate and process non-cognate amino acids such as alanine and cysteine, to avoid such errors it has two additional distinct editing activities against alanine. One activity is designated as 'pretransfer' editing and involves the tRNA(Pro)-independent hydrolysis of activated Ala-AMP. The other activity is designated 'posttransfer' editing and involves deacylation of mischarged Ala-tRNA(Pro). The misacylated Cys-tRNA(Pro) is not edited by ProRS. This is Proline--tRNA ligase from Lactococcus lactis subsp. lactis (strain IL1403) (Streptococcus lactis).